A 301-amino-acid chain; its full sequence is Hydroxyquinol 1,2-dioxygenase (301 aa).

Tyr-169, Tyr-202, His-226, and His-228 together coordinate Fe cation.

This sequence belongs to the intradiol ring-cleavage dioxygenase family. Fe(3+) serves as cofactor.

It carries out the reaction benzene-1,2,4-triol + O2 = maleylacetate + 2 H(+). It participates in aromatic compound metabolism. Involved in resorcinol degradation. Catalyzes the conversion of hydroxyquinol to malelylacetate. Also shows weak activity with catechol, 3-methylcatechol and 4-methylcatechol, but cannot use 4-chlorocatechol, 4-nitrocatechol or protocatechuate. In Corynebacterium glutamicum (strain ATCC 13032 / DSM 20300 / JCM 1318 / BCRC 11384 / CCUG 27702 / LMG 3730 / NBRC 12168 / NCIMB 10025 / NRRL B-2784 / 534), this protein is Hydroxyquinol 1,2-dioxygenase.